The sequence spans 342 residues: Dihydroorotase (342 aa).

Positions 13 and 15 each coordinate Zn(2+). Residues 15-17 (HLR) and N41 each bind substrate. Zn(2+)-binding residues include K98, H135, and H173. K98 is subject to N6-carboxylysine. Substrate is bound at residue H135. L218 is a substrate binding site. Zn(2+) is bound at residue D246. D246 is a catalytic residue. Substrate contacts are provided by H250 and A262.

Belongs to the metallo-dependent hydrolases superfamily. DHOase family. Class II DHOase subfamily. In terms of assembly, homodimer. Zn(2+) serves as cofactor.

It carries out the reaction (S)-dihydroorotate + H2O = N-carbamoyl-L-aspartate + H(+). It participates in pyrimidine metabolism; UMP biosynthesis via de novo pathway; (S)-dihydroorotate from bicarbonate: step 3/3. Functionally, catalyzes the reversible cyclization of carbamoyl aspartate to dihydroorotate. This chain is Dihydroorotase, found in Aliivibrio salmonicida (strain LFI1238) (Vibrio salmonicida (strain LFI1238)).